The sequence spans 57 residues: Potassium channel toxin alpha-KTx 26.1 (57 aa).

The first 22 residues, 1 to 22, serve as a signal peptide directing secretion; it reads MSRLFVFILIALFLSAIIDVMS. Cystine bridges form between Cys30–Cys48, Cys34–Cys53, and Cys38–Cys55.

It belongs to the short scorpion toxin superfamily. Potassium channel inhibitor family. Alpha-KTx 26 subfamily. As to expression, expressed by the venom gland.

Its subcellular location is the secreted. In terms of biological role, recombinant toxin that reversibly inhibits the potassium current of mKv1.3/KCNA3 channel stably expressed in COS7 cells (IC(50)=150 nM). Also shows a weak inhibition on Kv1.2/KCNA2, Kv1.3/KCNA3 and TRPV1 channels. In Olivierus martensii (Manchurian scorpion), this protein is Potassium channel toxin alpha-KTx 26.1.